The primary structure comprises 842 residues: Envelope glycoprotein gp160 (842 aa).

An N-terminal signal peptide occupies residues M1 to E23. At Q24–I663 the chain is on the extracellular side. Residues C45 and C65 are joined by a disulfide bond. 19 N-linked (GlcNAc...) asparagine; by host glycosylation sites follow: N79, N123, N131, N134, N149, N153, N181, N190, N225, N229, N234, N255, N267, N278, N284, N290, N320, N331, and N345. Cystine bridges form between C110–C198, C117–C189, C122–C150, C211–C240, and C221–C232. The segment at C122 to N149 is V1. A V2 region spans residues C150–C189. The tract at residues C285–Y318 is V3. A disulfide bond links C285 and C319. The CD4-binding loop stretch occupies residues R353–L363. Disulfide bonds link C367–C423 and C374–C396. Residues C374–C396 are V4. Residues N375, N386, N422, and N426 are each glycosylated (N-linked (GlcNAc...) asparagine; by host). 2 V5 regions span residues D439 to S448 and K441 to S448. Residues A489–A510 are fusion peptide. Residues K552–I570 form an immunosuppression region. Residues C576 and C582 are joined by a disulfide bond. N-linked (GlcNAc...) asparagine; by host glycosylation is found at N589, N594, N595, N604, and N616. Residues E612–D646 are a coiled coil. Residues E641–K662 are MPER; binding to GalCer. The helical transmembrane segment at A664–I684 threads the bilayer. Residues A685–I842 are Cytoplasmic-facing. Positions Y691 to L694 match the YXXL motif; contains endocytosis signal motif.

Belongs to the HIV-1 env protein family. As to quaternary structure, the mature envelope protein (Env) consists of a homotrimer of non-covalently associated gp120-gp41 heterodimers. The resulting complex protrudes from the virus surface as a spike. There seems to be as few as 10 spikes on the average virion. Interacts with host CD4, CCR5 and CXCR4. Gp120 also interacts with the C-type lectins CD209/DC-SIGN and CLEC4M/DC-SIGNR (collectively referred to as DC-SIGN(R)). Gp120 and gp41 interact with GalCer. Gp120 interacts with host ITGA4/ITGB7 complex; on CD4+ T-cells, this interaction results in rapid activation of integrin ITGAL/LFA-1, which facilitates efficient cell-to-cell spreading of HIV-1. Gp120 interacts with cell-associated heparan sulfate; this interaction increases virus infectivity on permissive cells and may be involved in infection of CD4- cells. In terms of assembly, the mature envelope protein (Env) consists of a homotrimer of non-covalently associated gp120-gp41 heterodimers. The resulting complex protrudes from the virus surface as a spike. There seems to be as few as 10 spikes on the average virion. Highly glycosylated by host. The high number of glycan on the protein is reffered to as 'glycan shield' because it contributes to hide protein sequence from adaptive immune system. In terms of processing, palmitoylation of the transmembrane protein and of Env polyprotein (prior to its proteolytic cleavage) is essential for their association with host cell membrane lipid rafts. Palmitoylation is therefore required for envelope trafficking to classical lipid rafts, but not for viral replication. Post-translationally, specific enzymatic cleavages in vivo yield mature proteins. Envelope glycoproteins are synthesized as an inactive precursor that is heavily N-glycosylated and processed likely by host cell furin in the Golgi to yield the mature SU and TM proteins. The cleavage site between SU and TM requires the minimal sequence [KR]-X-[KR]-R. About 2 of the 9 disulfide bonds of gp41 are reduced by P4HB/PDI, following binding to CD4 receptor.

The protein localises to the virion membrane. It is found in the host cell membrane. Its subcellular location is the host endosome membrane. Oligomerizes in the host endoplasmic reticulum into predominantly trimers. In a second time, gp160 transits in the host Golgi, where glycosylation is completed. The precursor is then proteolytically cleaved in the trans-Golgi and thereby activated by cellular furin or furin-like proteases to produce gp120 and gp41. In terms of biological role, attaches the virus to the host lymphoid cell by binding to the primary receptor CD4. This interaction induces a structural rearrangement creating a high affinity binding site for a chemokine coreceptor like CXCR4 and/or CCR5. Acts as a ligand for CD209/DC-SIGN and CLEC4M/DC-SIGNR, which are respectively found on dendritic cells (DCs), and on endothelial cells of liver sinusoids and lymph node sinuses. These interactions allow capture of viral particles at mucosal surfaces by these cells and subsequent transmission to permissive cells. HIV subverts the migration properties of dendritic cells to gain access to CD4+ T-cells in lymph nodes. Virus transmission to permissive T-cells occurs either in trans (without DCs infection, through viral capture and transmission), or in cis (following DCs productive infection, through the usual CD4-gp120 interaction), thereby inducing a robust infection. In trans infection, bound virions remain infectious over days and it is proposed that they are not degraded, but protected in non-lysosomal acidic organelles within the DCs close to the cell membrane thus contributing to the viral infectious potential during DCs' migration from the periphery to the lymphoid tissues. On arrival at lymphoid tissues, intact virions recycle back to DCs' cell surface allowing virus transmission to CD4+ T-cells. Its function is as follows. Acts as a class I viral fusion protein. Under the current model, the protein has at least 3 conformational states: pre-fusion native state, pre-hairpin intermediate state, and post-fusion hairpin state. During fusion of viral and target intracellular membranes, the coiled coil regions (heptad repeats) assume a trimer-of-hairpins structure, positioning the fusion peptide in close proximity to the C-terminal region of the ectodomain. The formation of this structure appears to drive apposition and subsequent fusion of viral and target cell membranes. Complete fusion occurs in host cell endosomes and is dynamin-dependent, however some lipid transfer might occur at the plasma membrane. The virus undergoes clathrin-dependent internalization long before endosomal fusion, thus minimizing the surface exposure of conserved viral epitopes during fusion and reducing the efficacy of inhibitors targeting these epitopes. Membranes fusion leads to delivery of the nucleocapsid into the cytoplasm. This Human immunodeficiency virus type 1 group N (isolate YBF30) (HIV-1) protein is Envelope glycoprotein gp160.